The chain runs to 323 residues: Digestive cysteine proteinase 2 (323 aa).

An N-terminal signal peptide occupies residues 1–16; the sequence is MKVAVLFLCGVALAAA. Residues 17 to 107 constitute a propeptide, activation peptide; it reads SPSWEHFKGK…FYPKKETGPQ (91 aa). 3 disulfides stabilise this stretch: C128–C171, C162–C204, and C263–C312. C131 is a catalytic residue. Active-site residues include H270 and N290.

Belongs to the peptidase C1 family.

With respect to regulation, inhibited by E-64, antipain, leupeptin, heavy metal ions, iodoacetic acid, dithionitrobenzene, p-hydroxymercuri-benzoate; activated by mercaptoethanol and dithiothreitol. This Homarus americanus (American lobster) protein is Digestive cysteine proteinase 2 (LCP2).